Here is an 869-residue protein sequence, read N- to C-terminus: Serendipity locus protein H-1 (869 aa).

Residues 1-17 (MEGGKGEGKRMKEEAPS) are compositionally biased toward basic and acidic residues. Disordered stretches follow at residues 1 to 32 (MEGG…AGTP) and 134 to 165 (FSVT…TPVK). Over residues 146-164 (AFTNSPFKKTSSSGTSTPV) the composition is skewed to polar residues. C2H2-type zinc fingers lie at residues 269-293 (HKCL…AAAH), 299-321 (YRCS…LKTH), 331-352 (KKCP…RKIH), 358-380 (YQCD…ARIH), 386-408 (YECP…QKYH), 414-436 (YRCE…NLVH), 442-464 (FACT…SNIH), and 470-493 (FKCN…RRRH). 2 disordered regions span residues 554–573 (TSTA…QPQQ) and 617–652 (PKQT…SSLE). The span at 630 to 648 (APKQLQQKPQLLQQGQPQQ) shows a compositional bias: low complexity.

As to expression, distribution varies between nurse cells and the oocyte during oogenesis. Weakly expressed in follicle and border cells.

Its subcellular location is the nucleus. Functionally, may belong to a complex set of multifingered proteins which play an important role in gene activation or regulation at early embryonic stages through a maximal accumulation of their transcripts (or protein product) in the mature oocyte. The sequence is that of Serendipity locus protein H-1 (wdn) from Drosophila melanogaster (Fruit fly).